Reading from the N-terminus, the 217-residue chain is MIANNDQYKEYMKGTTTVGIVCNDGIVLATDKRATMGNLIADKEAKKLYKIDDYMAMTIAGSVGDAQSLVRIISAEANLYKLRTGNNIPPHSCAMLLSNVLHGSRHFPFLIQLIIGGYDTIHGAKLFSLDAVGGLNEETSFTATGSGSPTAFGVLEEEYKKDMTINKGKLLAIKSLTAAMKRDAFSGNGISLAVIDKNGVKIYSDEEIEELSNILYK.

Positions 1-14 (MIANNDQYKEYMKG) are cleaved as a propeptide — removed in mature form; by autocatalysis. The active-site Nucleophile is the T15.

This sequence belongs to the peptidase T1B family. As to quaternary structure, the 20S proteasome core is composed of 14 alpha and 14 beta subunits that assemble into four stacked heptameric rings, resulting in a barrel-shaped structure. The two inner rings, each composed of seven catalytic beta subunits, are sandwiched by two outer rings, each composed of seven alpha subunits. The catalytic chamber with the active sites is on the inside of the barrel. Has a gated structure, the ends of the cylinder being occluded by the N-termini of the alpha-subunits. Is capped at one or both ends by the proteasome regulatory ATPase, PAN.

It is found in the cytoplasm. The enzyme catalyses Cleavage of peptide bonds with very broad specificity.. Its activity is regulated as follows. The formation of the proteasomal ATPase PAN-20S proteasome complex, via the docking of the C-termini of PAN into the intersubunit pockets in the alpha-rings, triggers opening of the gate for substrate entry. Interconversion between the open-gate and close-gate conformations leads to a dynamic regulation of the 20S proteasome proteolysis activity. Functionally, component of the proteasome core, a large protease complex with broad specificity involved in protein degradation. This chain is Proteasome subunit beta, found in Methanococcus aeolicus (strain ATCC BAA-1280 / DSM 17508 / OCM 812 / Nankai-3).